A 605-amino-acid chain; its full sequence is Isocitrate dehydrogenase kinase/phosphatase (605 aa).

ATP is bound by residues 327–333 and lysine 348; that span reads APGIKGL. Aspartate 383 is an active-site residue.

This sequence belongs to the AceK family.

The protein resides in the cytoplasm. The enzyme catalyses L-seryl-[isocitrate dehydrogenase] + ATP = O-phospho-L-seryl-[isocitrate dehydrogenase] + ADP + H(+). Its function is as follows. Bifunctional enzyme which can phosphorylate or dephosphorylate isocitrate dehydrogenase (IDH) on a specific serine residue. This is a regulatory mechanism which enables bacteria to bypass the Krebs cycle via the glyoxylate shunt in response to the source of carbon. When bacteria are grown on glucose, IDH is fully active and unphosphorylated, but when grown on acetate or ethanol, the activity of IDH declines drastically concomitant with its phosphorylation. This is Isocitrate dehydrogenase kinase/phosphatase from Burkholderia orbicola (strain MC0-3).